The chain runs to 444 residues: ATP-dependent protease ATPase subunit HslU (444 aa).

ATP is bound by residues I20, 62–67 (GVGKTE), D257, E322, and R394.

This sequence belongs to the ClpX chaperone family. HslU subfamily. In terms of assembly, a double ring-shaped homohexamer of HslV is capped on each side by a ring-shaped HslU homohexamer. The assembly of the HslU/HslV complex is dependent on binding of ATP.

The protein localises to the cytoplasm. Functionally, ATPase subunit of a proteasome-like degradation complex; this subunit has chaperone activity. The binding of ATP and its subsequent hydrolysis by HslU are essential for unfolding of protein substrates subsequently hydrolyzed by HslV. HslU recognizes the N-terminal part of its protein substrates and unfolds these before they are guided to HslV for hydrolysis. This Bordetella avium (strain 197N) protein is ATP-dependent protease ATPase subunit HslU.